Consider the following 171-residue polypeptide: Mitochondrial import inner membrane translocase subunit Tim17-A (171 aa).

Cysteine 9 and cysteine 78 are disulfide-bonded. The next 3 helical transmembrane spans lie at 17-37 (CGGAFTMGTIGGGIFQAFKGF), 63-77 (GGSFAVWGGLFSTID), and 113-133 (VGSAAMGGILLALIEGAGILL). The segment at 147 to 171 (FAEDHSQLPSSQLPSSPFGDYRQYQ) is disordered. Over residues 153 to 163 (QLPSSQLPSSP) the composition is skewed to low complexity.

This sequence belongs to the Tim17/Tim22/Tim23 family. As to quaternary structure, component of the TIM23 complex at least composed of TIMM23, TIMM17 (TIMM17A or TIMM17B) and TIMM50. The complex interacts with the TIMM44 component of the PAM complex and with DNAJC15. Post-translationally, degraded by YMEL1 downstream of the integrated stress response (ISR).

The protein localises to the mitochondrion inner membrane. Its function is as follows. Essential component of the TIM23 complex, a complex that mediates the translocation of transit peptide-containing proteins across the mitochondrial inner membrane. The chain is Mitochondrial import inner membrane translocase subunit Tim17-A (Timm17a) from Rattus norvegicus (Rat).